Consider the following 294-residue polypeptide: Homoserine kinase (294 aa).

83–93 (PLARGLGSSAS) provides a ligand contact to ATP.

It belongs to the GHMP kinase family. Homoserine kinase subfamily.

The protein localises to the cytoplasm. It carries out the reaction L-homoserine + ATP = O-phospho-L-homoserine + ADP + H(+). It functions in the pathway amino-acid biosynthesis; L-threonine biosynthesis; L-threonine from L-aspartate: step 4/5. Functionally, catalyzes the ATP-dependent phosphorylation of L-homoserine to L-homoserine phosphate. The sequence is that of Homoserine kinase from Oceanobacillus iheyensis (strain DSM 14371 / CIP 107618 / JCM 11309 / KCTC 3954 / HTE831).